Consider the following 833-residue polypeptide: Protein translocase subunit SecA (833 aa).

ATP is bound by residues glutamine 87, 105-109, and aspartate 494; that span reads GEGKT. A disordered region spans residues 789–816; that stretch reads PAAVAYSGGEAEAGPAQPHREDPKVGRN. The span at 806–815 shows a compositional bias: basic and acidic residues; that stretch reads PHREDPKVGR. Cysteine 819, cysteine 821, cysteine 830, and cysteine 831 together coordinate Zn(2+).

The protein belongs to the SecA family. Monomer and homodimer. Part of the essential Sec protein translocation apparatus which comprises SecA, SecYEG and auxiliary proteins SecDF-YajC and YidC. It depends on Zn(2+) as a cofactor.

The protein localises to the cell inner membrane. The protein resides in the cytoplasm. The catalysed reaction is ATP + H2O + cellular proteinSide 1 = ADP + phosphate + cellular proteinSide 2.. Its function is as follows. Part of the Sec protein translocase complex. Interacts with the SecYEG preprotein conducting channel. Has a central role in coupling the hydrolysis of ATP to the transfer of proteins into and across the cell membrane, serving as an ATP-driven molecular motor driving the stepwise translocation of polypeptide chains across the membrane. This is Protein translocase subunit SecA from Nitratidesulfovibrio vulgaris (strain ATCC 29579 / DSM 644 / CCUG 34227 / NCIMB 8303 / VKM B-1760 / Hildenborough) (Desulfovibrio vulgaris).